We begin with the raw amino-acid sequence, 847 residues long: Leucine--tRNA ligase (847 aa).

Residues 41 to 51 (PYPSGRIHMGH) carry the 'HIGH' region motif. The 'KMSKS' region motif lies at 619–623 (KMSKS). K622 lines the ATP pocket.

This sequence belongs to the class-I aminoacyl-tRNA synthetase family.

It localises to the cytoplasm. It catalyses the reaction tRNA(Leu) + L-leucine + ATP = L-leucyl-tRNA(Leu) + AMP + diphosphate. This chain is Leucine--tRNA ligase, found in Cereibacter sphaeroides (strain ATCC 17023 / DSM 158 / JCM 6121 / CCUG 31486 / LMG 2827 / NBRC 12203 / NCIMB 8253 / ATH 2.4.1.) (Rhodobacter sphaeroides).